The chain runs to 424 residues: MAKNIQAIRGMNDYLPGETAIWQRIEGTLKNVLGSYGYSEIRLPIVEQTPLFKRAIGEVTDVVEKEMYTFEDRNGDSLTLRPEGTAGCVRAGIEHGLLYNQEQRLWYIGPMFRHERPQKGRYRQFHQLGAEVFGLQGPDIDAELIMLTARWWRALGIAEHVSLELNSIGSLEARANYRDALVAFLEQHQETLDEDCKRRMYTNPLRVLDSKNPDVQALLNDAPALGDYLDDDSREHFAGLCKLLDAAGIAYTVNQRLVRGLDYYNRTVFEWVTNSLGSQGTVCAGGRYDGLVEQLGGRATPAVGFAMGLERLVLLVQAVNPEFIASPVVDIYLVAAGAQTQSAAMTLAERLRDEMPGVKLMTNHGGGNFKKQFARADKWGARIALVLGESEVADGTVVVKDLRSGEQTAVAQDSVAAHLRTLLG.

This sequence belongs to the class-II aminoacyl-tRNA synthetase family. As to quaternary structure, homodimer.

It is found in the cytoplasm. The enzyme catalyses tRNA(His) + L-histidine + ATP = L-histidyl-tRNA(His) + AMP + diphosphate + H(+). The chain is Histidine--tRNA ligase from Salmonella paratyphi B (strain ATCC BAA-1250 / SPB7).